A 481-amino-acid polypeptide reads, in one-letter code: 3-isopropylmalate dehydratase large subunit (481 aa).

Residues C363, C423, and C426 each coordinate [4Fe-4S] cluster. Residues 434-465 (LRPGQRAASTSNRNFEGRQGRGGRTHLVSPPV) are disordered.

Belongs to the aconitase/IPM isomerase family. LeuC type 1 subfamily. Heterodimer of LeuC and LeuD. The cofactor is [4Fe-4S] cluster.

The catalysed reaction is (2R,3S)-3-isopropylmalate = (2S)-2-isopropylmalate. It functions in the pathway amino-acid biosynthesis; L-leucine biosynthesis; L-leucine from 3-methyl-2-oxobutanoate: step 2/4. Its function is as follows. Catalyzes the isomerization between 2-isopropylmalate and 3-isopropylmalate, via the formation of 2-isopropylmaleate. The chain is 3-isopropylmalate dehydratase large subunit from Salinispora tropica (strain ATCC BAA-916 / DSM 44818 / JCM 13857 / NBRC 105044 / CNB-440).